The following is a 282-amino-acid chain: Bifunctional protein FolD (282 aa).

Residues 165-167, serine 190, and threonine 231 contribute to the NADP(+) site; that span reads GRS.

It belongs to the tetrahydrofolate dehydrogenase/cyclohydrolase family. As to quaternary structure, homodimer.

It carries out the reaction (6R)-5,10-methylene-5,6,7,8-tetrahydrofolate + NADP(+) = (6R)-5,10-methenyltetrahydrofolate + NADPH. It catalyses the reaction (6R)-5,10-methenyltetrahydrofolate + H2O = (6R)-10-formyltetrahydrofolate + H(+). It functions in the pathway one-carbon metabolism; tetrahydrofolate interconversion. In terms of biological role, catalyzes the oxidation of 5,10-methylenetetrahydrofolate to 5,10-methenyltetrahydrofolate and then the hydrolysis of 5,10-methenyltetrahydrofolate to 10-formyltetrahydrofolate. The chain is Bifunctional protein FolD from Clostridium botulinum (strain Eklund 17B / Type B).